A 633-amino-acid polypeptide reads, in one-letter code: Polypeptide N-acetylgalactosaminyltransferase 3 (633 aa).

The Cytoplasmic segment spans residues 1–19 (MAHLKRLVKLHIKRHYHKK). The chain crosses the membrane as a helical; Signal-anchor for type II membrane protein span at residues 20–37 (FWKLGAVIFFFIIVLVLM). The Lumenal portion of the chain corresponds to 38-633 (QREVSVQYSK…LQKWILSQND (596 aa)). An N-linked (GlcNAc...) asparagine glycan is attached at N132. The interval 184–293 (LPTTSVIIVF…YGWLEPLLAR (110 aa)) is catalytic subdomain A. The Mn(2+) site is built by D277 and H279. N-linked (GlcNAc...) asparagine glycosylation occurs at N297. The interval 356 to 418 (PIKTPTFAGG…PCSVVGHVFR (63 aa)) is catalytic subdomain B. A Mn(2+)-binding site is contributed by H415. An N-linked (GlcNAc...) asparagine glycan is attached at N484. A Ricin B-type lectin domain is found at 504 to 630 (VISGYIKSVG…SDPLQKWILS (127 aa)). An intrachain disulfide couples C517 to C535. UDP-N-acetyl-alpha-D-galactosamine is bound by residues D519, E522, H536, and N541. Intrachain disulfides connect C561–C574 and C605–C618.

The protein belongs to the glycosyltransferase 2 family. GalNAc-T subfamily. The cofactor is Mn(2+). In terms of tissue distribution, expressed in organs that contain secretory epithelial glands. Highly expressed in pancreas, skin, kidney and testis. Weakly expressed in prostate, ovary, intestine and colon. Also expressed in placenta and lung and fetal lung and fetal kidney.

The protein resides in the golgi apparatus. Its subcellular location is the golgi stack membrane. It carries out the reaction L-seryl-[protein] + UDP-N-acetyl-alpha-D-galactosamine = a 3-O-[N-acetyl-alpha-D-galactosaminyl]-L-seryl-[protein] + UDP + H(+). The enzyme catalyses L-threonyl-[protein] + UDP-N-acetyl-alpha-D-galactosamine = a 3-O-[N-acetyl-alpha-D-galactosaminyl]-L-threonyl-[protein] + UDP + H(+). Its pathway is protein modification; protein glycosylation. Functionally, catalyzes the initial reaction in O-linked oligosaccharide biosynthesis, the transfer of an N-acetyl-D-galactosamine residue to a serine or threonine residue on the protein receptor. Has activity toward HIV envelope glycoprotein gp120, EA2, MUC2, MUC1A and MUC5AC. Probably glycosylates fibronectin in vivo. Glycosylates FGF23. The protein is Polypeptide N-acetylgalactosaminyltransferase 3 (GALNT3) of Homo sapiens (Human).